We begin with the raw amino-acid sequence, 142 residues long: Small ribosomal subunit protein bS6 (142 aa).

A compositionally biased stretch (basic and acidic residues) spans N110–E133. A disordered region spans residues N110–E142.

This sequence belongs to the bacterial ribosomal protein bS6 family.

In terms of biological role, binds together with bS18 to 16S ribosomal RNA. This Helicobacter pylori (strain ATCC 700392 / 26695) (Campylobacter pylori) protein is Small ribosomal subunit protein bS6 (rpsF).